Here is an 819-residue protein sequence, read N- to C-terminus: FYN-binding protein 1 (819 aa).

Over residues Met1–Ala45 the composition is skewed to polar residues. Residues Met1 to Lys490 are disordered. Residue Lys3 is modified to N6-acetyllysine. 2 positions are modified to phosphoserine: Ser28 and Ser46. Basic and acidic residues predominate over residues Thr69–Lys79. A compositionally biased stretch (pro residues) spans Gly150–Pro160. Residue Ser222 is modified to Phosphoserine. 2 stretches are compositionally biased toward basic and acidic residues: residues Pro237–Gly248 and Asn273–Leu285. Residue Ser318 is modified to Phosphoserine. Composition is skewed to pro residues over residues Gly342–Pro351 and Leu380–Ile412. Acidic residues predominate over residues Leu439–Ile453. Position 445 is a phosphoserine (Ser445). Residues Glu448–Thr495 adopt a coiled-coil conformation. The span at Asp454–Lys489 shows a compositional bias: basic and acidic residues. The Nuclear localization signal signature appears at Lys479–Lys493. The SH3 1 domain maps to Gln499–Asp560. The residue at position 559 (Tyr559) is a Phosphotyrosine. A phosphoserine mark is found at Ser561 and Ser568. Residues Tyr584–Val587 carry the SH2-binding; to LCP2 motif. Disordered stretches follow at residues Glu589–Thr635 and Lys649–Glu728. Residues Thr610–Gly626 are compositionally biased toward acidic residues. The SH2-binding; to FYN signature appears at Tyr615–Ile618. Over residues Lys649–Glu664 the composition is skewed to basic and acidic residues. Residues Asn668 to His677 show a composition bias toward polar residues. Residues Val682–Ala692 show a composition bias toward acidic residues. Residue Tyr687 is modified to Phosphotyrosine. The Nuclear localization signal signature appears at Arg710 to Lys736. Over residues Ala711–Glu728 the composition is skewed to basic and acidic residues. The SH3 2 domain occupies Lys736–Gly804.

As to quaternary structure, part of a complex consisting of SKAP2, FYB1 and PTPNS1. Part of a complex consisting of SKAP2, FYB1 and PIRB. Part of a complex consisting of SKAP1, FYB1 and CLNK. Interacts with CLNK (via its SH2 domain); this interaction allows SKAP1 and FYB1 to recruit FYN to the complex, thus promoting the phosphorylation of CLNK by FYN. Interacts with FYN. Interacts with LCP2. Interacts with SKAP1. Interacts with SKAP2. Interacts with FASLG. Interacts with EVL. Interacts with TMEM47. Interacts with LCK. T-cell receptor ligation leads to increased tyrosine phosphorylation. Expressed in hematopoietic tissues such as myeloid and T-cells, spleen and thymus. Not expressed in B-cells, nor in non-lymphoid tissues. FYB-130 is preferentially expressed in mature T-cells compared to FYB-120, whereas thymocytes showed a greater relative amount of FYB-120. Expressed in podocytes.

Its subcellular location is the cytoplasm. The protein localises to the nucleus. The protein resides in the cell junction. Acts as an adapter protein of the FYN and LCP2 signaling cascades in T-cells. May play a role in linking T-cell signaling to remodeling of the actin cytoskeleton. Modulates the expression of IL2. Involved in platelet activation. Prevents the degradation of SKAP1 and SKAP2. May be involved in high affinity immunoglobulin epsilon receptor signaling in mast cells. The sequence is that of FYN-binding protein 1 (Fyb1) from Mus musculus (Mouse).